We begin with the raw amino-acid sequence, 296 residues long: 5,10-methylenetetrahydrofolate reductase (296 aa).

E28 acts as the Proton donor/acceptor in catalysis. T59 is a binding site for NADH. The FAD site is built by Y60, A62, H88, R118, G119, D120, A132, Y152, H156, A159, D165, N168, R171, and K172. D120 serves as a coordination point for (6S)-5-methyl-5,6,7,8-tetrahydrofolate. An NADH-binding site is contributed by Q183. 3 residues coordinate (6S)-5-methyl-5,6,7,8-tetrahydrofolate: Q183, Q219, and R279.

It belongs to the methylenetetrahydrofolate reductase family. FAD serves as cofactor.

It carries out the reaction (6S)-5-methyl-5,6,7,8-tetrahydrofolate + NAD(+) = (6R)-5,10-methylene-5,6,7,8-tetrahydrofolate + NADH + H(+). It functions in the pathway one-carbon metabolism; tetrahydrofolate interconversion. It participates in amino-acid biosynthesis; L-methionine biosynthesis via de novo pathway. Functionally, catalyzes the NADH-dependent reduction of 5,10-methylenetetrahydrofolate to 5-methyltetrahydrofolate. Is required to provide the methyl group necessary for methionine synthetase to convert homocysteine to methionine; the methyl group is given by 5-methyltetrahydrofolate. The sequence is that of 5,10-methylenetetrahydrofolate reductase (metF) from Salmonella typhimurium (strain LT2 / SGSC1412 / ATCC 700720).